The primary structure comprises 153 residues: SKP1-like protein 9 (153 aa).

Residues 95-153 form an interaction with the F-box domain of F-box proteins region; that stretch reads IKAANYLNIKSLFDLACQTVAEIIKGNTPEQIREFFNIENDLTPEEEAAIRRENKWAFE.

Belongs to the SKP1 family. In terms of assembly, part of a SCF (SKP1-cullin-F-box) protein ligase complex. Interacts with CPR1/CPR30 and At3g61590. As to expression, expressed in leaves, shoot apical meristem (SAM), roots, flowers and pollen.

It is found in the nucleus. The protein operates within protein modification; protein ubiquitination. Functionally, involved in ubiquitination and subsequent proteasomal degradation of target proteins. Together with CUL1, RBX1 and a F-box protein, it forms a SCF E3 ubiquitin ligase complex. The functional specificity of this complex depends on the type of F-box protein. In the SCF complex, it serves as an adapter that links the F-box protein to CUL1. This is SKP1-like protein 9 (ASK9) from Arabidopsis thaliana (Mouse-ear cress).